The chain runs to 175 residues: Large ribosomal subunit protein uL10 (175 aa).

It belongs to the universal ribosomal protein uL10 family. As to quaternary structure, part of the ribosomal stalk of the 50S ribosomal subunit. The N-terminus interacts with L11 and the large rRNA to form the base of the stalk. The C-terminus forms an elongated spine to which L12 dimers bind in a sequential fashion forming a multimeric L10(L12)X complex.

Functionally, forms part of the ribosomal stalk, playing a central role in the interaction of the ribosome with GTP-bound translation factors. This chain is Large ribosomal subunit protein uL10, found in Methylobacterium nodulans (strain LMG 21967 / CNCM I-2342 / ORS 2060).